A 118-amino-acid chain; its full sequence is Large ribosomal subunit protein uL22 (118 aa).

Belongs to the universal ribosomal protein uL22 family. Part of the 50S ribosomal subunit.

Functionally, this protein binds specifically to 23S rRNA; its binding is stimulated by other ribosomal proteins, e.g. L4, L17, and L20. It is important during the early stages of 50S assembly. It makes multiple contacts with different domains of the 23S rRNA in the assembled 50S subunit and ribosome. In terms of biological role, the globular domain of the protein is located near the polypeptide exit tunnel on the outside of the subunit, while an extended beta-hairpin is found that lines the wall of the exit tunnel in the center of the 70S ribosome. The sequence is that of Large ribosomal subunit protein uL22 from Leuconostoc mesenteroides subsp. mesenteroides (strain ATCC 8293 / DSM 20343 / BCRC 11652 / CCM 1803 / JCM 6124 / NCDO 523 / NBRC 100496 / NCIMB 8023 / NCTC 12954 / NRRL B-1118 / 37Y).